A 375-amino-acid chain; its full sequence is MEAESPASAGASEPRALGTVDSIGSQLSRIRRKLFTWDILKTIALGQMLSLCICGTAITSQYLAEKYRVNTPMLQSFINYCLLFLVYTLMLAFQSGSDNLLEILRRKWWKYTLLGLADVEANYLIVRAYQYTTLTSVQLLDCFGIPVLMALSWFILRARYKVIHFIAVFVCLLGVGTMVGADILAGREDNSGSDVLIGDILVLLGASLYAVSNVCEEYIVKKLSRQEFLGMVGLFGTIISGIQLLIVEYKDIARIQWDWKIALLFVAFALCMFCLYSFMPLVIKVTSATSVNLGILTADLYSLFFGLFLFEYKFSGLYILSFTVIMVGFILYCSTPTRTVEPPESSVPPVTSIGIDNLGLKLEESGLPETHSAVL.

Met1 is modified (N-acetylmethionine). Residues Ser5, Ser22, Ser25, and Ser28 each carry the phosphoserine modification. 10 consecutive transmembrane segments (helical) span residues 39–59, 73–93, 108–126, 136–156, 165–185, 195–215, 227–247, 263–283, 290–310, and 314–334; these read ILKTIALGQMLSLCICGTAIT, MLQSFINYCLLFLVYTLMLAF, WWKYTLLGLADVEANYLIV, SVQLLDCFGIPVLMALSWFIL, FIAVFVCLLGVGTMVGADILA, VLIGDILVLLGASLYAVSNVC, EFLGMVGLFGTIISGIQLLIV, LLFVAFALCMFCLYSFMPLVI, SVNLGILTADLYSLFFGLFLF, and FSGLYILSFTVIMVGFILYCS. A Phosphoserine modification is found at Ser372.

Belongs to the SLC35F solute transporter family.

The protein resides in the membrane. Putative solute transporter. The sequence is that of Solute carrier family 35 member F2 (Slc35f2) from Mus musculus (Mouse).